Here is a 346-residue protein sequence, read N- to C-terminus: Phosphoribosylformylglycinamidine cyclo-ligase (346 aa).

It belongs to the AIR synthase family.

The protein localises to the cytoplasm. It carries out the reaction 2-formamido-N(1)-(5-O-phospho-beta-D-ribosyl)acetamidine + ATP = 5-amino-1-(5-phospho-beta-D-ribosyl)imidazole + ADP + phosphate + H(+). Its pathway is purine metabolism; IMP biosynthesis via de novo pathway; 5-amino-1-(5-phospho-D-ribosyl)imidazole from N(2)-formyl-N(1)-(5-phospho-D-ribosyl)glycinamide: step 2/2. This chain is Phosphoribosylformylglycinamidine cyclo-ligase, found in Bacillus velezensis (strain DSM 23117 / BGSC 10A6 / LMG 26770 / FZB42) (Bacillus amyloliquefaciens subsp. plantarum).